Here is a 213-residue protein sequence, read N- to C-terminus: Orotate phosphoribosyltransferase (213 aa).

Lys-26 is a 5-phospho-alpha-D-ribose 1-diphosphate binding site. 34–35 (FF) serves as a coordination point for orotate. Residues 72–73 (YK), Arg-99, Lys-100, Lys-103, His-105, and 124–132 (DDVITAGTA) each bind 5-phospho-alpha-D-ribose 1-diphosphate. Orotate is bound by residues Thr-128 and Arg-156.

The protein belongs to the purine/pyrimidine phosphoribosyltransferase family. PyrE subfamily. As to quaternary structure, homodimer. It depends on Mg(2+) as a cofactor.

It carries out the reaction orotidine 5'-phosphate + diphosphate = orotate + 5-phospho-alpha-D-ribose 1-diphosphate. It participates in pyrimidine metabolism; UMP biosynthesis via de novo pathway; UMP from orotate: step 1/2. Its function is as follows. Catalyzes the transfer of a ribosyl phosphate group from 5-phosphoribose 1-diphosphate to orotate, leading to the formation of orotidine monophosphate (OMP). This chain is Orotate phosphoribosyltransferase, found in Erwinia tasmaniensis (strain DSM 17950 / CFBP 7177 / CIP 109463 / NCPPB 4357 / Et1/99).